A 159-amino-acid polypeptide reads, in one-letter code: 2-C-methyl-D-erythritol 2,4-cyclodiphosphate synthase (159 aa).

A divalent metal cation-binding residues include aspartate 11 and histidine 13. Residues 11–13 (DVH) and 37–38 (HS) each bind 4-CDP-2-C-methyl-D-erythritol 2-phosphate. Histidine 45 lines the a divalent metal cation pocket. 4-CDP-2-C-methyl-D-erythritol 2-phosphate contacts are provided by residues 59–61 (DIG) and 64–68 (FPDSD).

It belongs to the IspF family. As to quaternary structure, homotrimer. The cofactor is a divalent metal cation.

It carries out the reaction 4-CDP-2-C-methyl-D-erythritol 2-phosphate = 2-C-methyl-D-erythritol 2,4-cyclic diphosphate + CMP. It participates in isoprenoid biosynthesis; isopentenyl diphosphate biosynthesis via DXP pathway; isopentenyl diphosphate from 1-deoxy-D-xylulose 5-phosphate: step 4/6. In terms of biological role, involved in the biosynthesis of isopentenyl diphosphate (IPP) and dimethylallyl diphosphate (DMAPP), two major building blocks of isoprenoid compounds. Catalyzes the conversion of 4-diphosphocytidyl-2-C-methyl-D-erythritol 2-phosphate (CDP-ME2P) to 2-C-methyl-D-erythritol 2,4-cyclodiphosphate (ME-CPP) with a corresponding release of cytidine 5-monophosphate (CMP). This Solibacter usitatus (strain Ellin6076) protein is 2-C-methyl-D-erythritol 2,4-cyclodiphosphate synthase.